The sequence spans 922 residues: Probable outer membrane protein pmp1 (922 aa).

Residues 1-26 (MRFSLCGFPLVFSFTLLSVFDTSLSA) form the signal peptide. Residues 620–922 (SLQTDRGLWI…NINCGSKFRF (303 aa)) enclose the Autotransporter domain.

It belongs to the PMP outer membrane protein family.

It is found in the secreted. The protein resides in the cell wall. Its subcellular location is the cell outer membrane. The chain is Probable outer membrane protein pmp1 (pmp1) from Chlamydia pneumoniae (Chlamydophila pneumoniae).